We begin with the raw amino-acid sequence, 203 residues long: Holliday junction branch migration complex subunit RuvA (203 aa).

Positions 1–64 (MIGRLNGILV…EDAQLLYGFI (64 aa)) are domain I. Positions 65–143 (TKQERALFRL…SLLEASVGNE (79 aa)) are domain II. Residues 144-154 (REFMLQTNYTA) form a flexible linker region. The tract at residues 155-203 (PAANAEEDAISALVSLGYKPPQASRAVSKAYKEGMDTETLIKLALKSML) is domain III.

It belongs to the RuvA family. In terms of assembly, homotetramer. Forms an RuvA(8)-RuvB(12)-Holliday junction (HJ) complex. HJ DNA is sandwiched between 2 RuvA tetramers; dsDNA enters through RuvA and exits via RuvB. An RuvB hexamer assembles on each DNA strand where it exits the tetramer. Each RuvB hexamer is contacted by two RuvA subunits (via domain III) on 2 adjacent RuvB subunits; this complex drives branch migration. In the full resolvosome a probable DNA-RuvA(4)-RuvB(12)-RuvC(2) complex forms which resolves the HJ.

It is found in the cytoplasm. Its function is as follows. The RuvA-RuvB-RuvC complex processes Holliday junction (HJ) DNA during genetic recombination and DNA repair, while the RuvA-RuvB complex plays an important role in the rescue of blocked DNA replication forks via replication fork reversal (RFR). RuvA specifically binds to HJ cruciform DNA, conferring on it an open structure. The RuvB hexamer acts as an ATP-dependent pump, pulling dsDNA into and through the RuvAB complex. HJ branch migration allows RuvC to scan DNA until it finds its consensus sequence, where it cleaves and resolves the cruciform DNA. The sequence is that of Holliday junction branch migration complex subunit RuvA from Shewanella denitrificans (strain OS217 / ATCC BAA-1090 / DSM 15013).